Consider the following 301-residue polypeptide: Homoserine O-acetyltransferase (301 aa).

Cys-142 (acyl-thioester intermediate) is an active-site residue. Lys-163 and Ser-192 together coordinate substrate. The active-site Proton acceptor is His-235. Glu-237 is a catalytic residue. Residue Arg-249 coordinates substrate.

This sequence belongs to the MetA family.

It localises to the cytoplasm. It carries out the reaction L-homoserine + acetyl-CoA = O-acetyl-L-homoserine + CoA. Its pathway is amino-acid biosynthesis; L-methionine biosynthesis via de novo pathway; O-acetyl-L-homoserine from L-homoserine: step 1/1. Its function is as follows. Transfers an acetyl group from acetyl-CoA to L-homoserine, forming acetyl-L-homoserine. This Bacillus cereus (strain 03BB102) protein is Homoserine O-acetyltransferase.